The chain runs to 339 residues: Senescence-specific cysteine protease SAG39 (339 aa).

An N-terminal signal peptide occupies residues 1 to 23 (MAMAKALLFAILGCLCLCSAVLA). Disulfide bonds link C144-C187, C178-C220, and C276-C328. C147 is an active-site residue. Residues H282 and N303 contribute to the active site.

This sequence belongs to the peptidase C1 family.

Its subcellular location is the vacuole. Cysteine protease that may have a developmental senescence specific cell death function during apoptosis, heavy metal detoxification, and hypersensitive response. The sequence is that of Senescence-specific cysteine protease SAG39 from Oryza sativa subsp. indica (Rice).